Reading from the N-terminus, the 255-residue chain is Small ribosomal subunit protein eS1 (255 aa).

Ala-2 is modified (N-acetylalanine; partial).

Belongs to the eukaryotic ribosomal protein eS1 family. In terms of assembly, component of the small ribosomal subunit. Mature ribosomes consist of a small (40S) and a large (60S) subunit. The 40S subunit contains about 33 different proteins and 1 molecule of RNA (18S). The 60S subunit contains about 49 different proteins and 3 molecules of RNA (25S, 5.8S and 5S).

It is found in the cytoplasm. The sequence is that of Small ribosomal subunit protein eS1 from Yarrowia lipolytica (strain CLIB 122 / E 150) (Yeast).